Reading from the N-terminus, the 137-residue chain is Putative pre-16S rRNA nuclease (137 aa).

The protein belongs to the YqgF nuclease family.

Its subcellular location is the cytoplasm. Functionally, could be a nuclease involved in processing of the 5'-end of pre-16S rRNA. The protein is Putative pre-16S rRNA nuclease of Anaeromyxobacter dehalogenans (strain 2CP-C).